Here is a 138-residue protein sequence, read N- to C-terminus: Hexon-interlacing protein (138 aa).

Residues 100 to 127 (LLVLLAQLEALTQRLGELSKQVAQLREQ) adopt a coiled-coil conformation.

Belongs to the adenoviridae hexon-interlacing protein family. Homotrimer. Interacts with hexon protein; this interaction tethers the hexons together. Self-interacts with adjacent proteins. Interacts with kinesin light chain KLC1; this interaction leads to capsid disruption at the nuclear pore complex during virus entry into host cell.

It is found in the virion. The protein resides in the host nucleus. Structural component of the virion that acts as a cement protein on the capsid exterior and forms triskelion structures consisting of three molecules that stabilize three hexon trimers at the center of each icosahedral facet and fixes the peripentonal hexons. Dispensable for assembly. During virus entry, recruits the anterograde motor kinesin-1 to the capsid docked at the nuclear pore complex thereby subjecting the docked capsid to a pulling force. The resulting tension leads to capsid disruption, dispersion of capsid fragments toward cell periphery and eventually viral DNA entry into the host nucleus. The polypeptide is Hexon-interlacing protein (Human adenovirus B serotype 7 (HAdV-7)).